Reading from the N-terminus, the 220-residue chain is Deoxyribose-phosphate aldolase 1 (220 aa).

The active-site Proton donor/acceptor is the aspartate 89. The active-site Schiff-base intermediate with acetaldehyde is lysine 151. The active-site Proton donor/acceptor is the lysine 180.

The protein belongs to the DeoC/FbaB aldolase family. DeoC type 1 subfamily.

It localises to the cytoplasm. The enzyme catalyses 2-deoxy-D-ribose 5-phosphate = D-glyceraldehyde 3-phosphate + acetaldehyde. It functions in the pathway carbohydrate degradation; 2-deoxy-D-ribose 1-phosphate degradation; D-glyceraldehyde 3-phosphate and acetaldehyde from 2-deoxy-alpha-D-ribose 1-phosphate: step 2/2. Catalyzes a reversible aldol reaction between acetaldehyde and D-glyceraldehyde 3-phosphate to generate 2-deoxy-D-ribose 5-phosphate. The polypeptide is Deoxyribose-phosphate aldolase 1 (Mesoplasma florum (strain ATCC 33453 / NBRC 100688 / NCTC 11704 / L1) (Acholeplasma florum)).